The following is a 144-amino-acid chain: Large ribosomal subunit protein uL11 (144 aa).

The protein belongs to the universal ribosomal protein uL11 family. In terms of assembly, part of the ribosomal stalk of the 50S ribosomal subunit. Interacts with L10 and the large rRNA to form the base of the stalk. L10 forms an elongated spine to which L12 dimers bind in a sequential fashion forming a multimeric L10(L12)X complex. Post-translationally, one or more lysine residues are methylated.

Forms part of the ribosomal stalk which helps the ribosome interact with GTP-bound translation factors. This Rhodococcus opacus (strain B4) protein is Large ribosomal subunit protein uL11.